A 975-amino-acid chain; its full sequence is GPI inositol-deacylase (975 aa).

Residues 27–47 form a helical membrane-spanning segment; sequence STLVIIVGLLLLCIITSTHIS. N-linked (GlcNAc...) asparagine glycosylation occurs at N49. S210 is an active-site residue. N-linked (GlcNAc...) asparagine glycosylation is found at N276, N384, N407, N419, and N488. The helical transmembrane segment at 655–675 threads the bilayer; sequence LAFASIPISIIALVLCYQFYY. Residue N696 is glycosylated (N-linked (GlcNAc...) asparagine). 3 helical membrane-spanning segments follow: residues 699–719, 751–771, and 818–838; these read LLIFLFLSVGPIAINHKAILT, FVWWIGPVFFIISVALLFIIL, and VCFISLGVMVYVPYQFAFILV. A glycan (N-linked (GlcNAc...) asparagine) is linked at N867. A run of 3 helical transmembrane segments spans residues 868 to 888, 932 to 952, and 955 to 975; these read VSFLMLTIFMIPINAPIVVVF, NWLIVVSILGYLSFYSFMYGI, and LYWVYHISNILNGVLFFLTIL.

Belongs to the GPI inositol-deacylase family.

The protein localises to the endoplasmic reticulum membrane. Its function is as follows. Involved in inositol deacylation of GPI-anchored proteins which plays important roles in the quality control and ER-associated degradation of GPI-anchored proteins. The chain is GPI inositol-deacylase (BST1) from Kluyveromyces lactis (strain ATCC 8585 / CBS 2359 / DSM 70799 / NBRC 1267 / NRRL Y-1140 / WM37) (Yeast).